A 578-amino-acid polypeptide reads, in one-letter code: XK-related protein 6 (578 aa).

The next 7 membrane-spanning stretches (helical) occupy residues 86 to 106, 114 to 134, 253 to 273, 307 to 327, 348 to 368, 377 to 397, and 410 to 430; these read WIVL…WLAV, FLWS…VQIL, WLQC…LASY, VLSL…FVVL, WEEV…WFNV, MVAY…LWYA, and LALC…VLYY.

This sequence belongs to the XK family.

It is found in the cell membrane. This is XK-related protein 6 (xkr6) from Tetraodon nigroviridis (Spotted green pufferfish).